Reading from the N-terminus, the 222-residue chain is Pleckstrin homology domain-containing family B member 2 (222 aa).

The PH domain maps to 2–109; the sequence is AFVKSGWLLR…WKFTLQDSRT (108 aa). K20 lines the a 1,2-diacyl-sn-glycero-3-phospho-L-serine pocket.

The protein localises to the recycling endosome membrane. Functionally, involved in retrograde transport of recycling endosomes. The chain is Pleckstrin homology domain-containing family B member 2 (PLEKHB2) from Pongo abelii (Sumatran orangutan).